We begin with the raw amino-acid sequence, 70 residues long: Large ribosomal subunit protein bL31 (70 aa).

Cys16, Cys18, Cys38, and Cys41 together coordinate Zn(2+).

It belongs to the bacterial ribosomal protein bL31 family. Type A subfamily. Part of the 50S ribosomal subunit. It depends on Zn(2+) as a cofactor.

In terms of biological role, binds the 23S rRNA. This is Large ribosomal subunit protein bL31 from Bifidobacterium adolescentis (strain ATCC 15703 / DSM 20083 / NCTC 11814 / E194a).